Here is a 664-residue protein sequence, read N- to C-terminus: E3 ubiquitin-protein ligase RNF139 (664 aa).

Position 2 is an N-acetylalanine (Ala2). The next 12 helical transmembrane spans lie at 51–71 (IVLQ…VLIL), 85–105 (AFLL…HIDF), 125–145 (SLWM…VTLL), 154–174 (LIIL…PLHI), 178–198 (LVFT…AVKL), 293–313 (GMSA…LAFI), 323–343 (LGFV…LSGL), 356–376 (MCLL…PVLM), 390–410 (FPVL…SYVL), 420–440 (LFAA…SLTV), 469–489 (SIIV…TMMF), and 495–512 (IRAF…YLQA). The segment at 547-586 (CAICYHEFTTSARITPCNHYFHALCLRKWLYIQDTCPMCH) adopts an RING-type; atypical zinc-finger fold. Positions 599–610 (SNVSNNNGFTPP) are enriched in polar residues. The interval 599–664 (SNVSNNNGFT…AAEEFNDDTD (66 aa)) is disordered. A compositionally biased stretch (basic and acidic residues) spans 616–628 (EAVREAAAESDRE). Residues 629–639 (LNEDDSTDCDD) show a composition bias toward acidic residues. Ser634 carries the post-translational modification Phosphoserine. Phosphothreonine is present on residues Thr635 and Thr663.

In terms of assembly, interacts with VHL. Interacts with MHC class I and HM13. Component of SCAP-SREBP complex composed of SREBF2, SCAP and RNF139; the complex hampers the interaction between SCAP and SEC24B, thereby reducing SREBF2 proteolytic processing. Interacts with SREBF2 (via C-terminal domain). Interacts with SCAP; the interaction inhibits the interaction of SCAP with SEC24B and hampering the ER to Golgi transport of the SCAP-SREBP complex. Interacts with SEC24B. Interacts with INSIG1 and INSIG2. Interacts with EIF3F and EIF3H; the interaction leads to protein translation inhibitions in a ubiquitination-dependent manner. Interacts with XBP1; the interaction induces ubiquitination and degradation of XBP1. Interacts with AUP1, AMFR and UBE2G2; interaction with AUP1 facilitates interaction of RNF139 with ubiquitin-conjugating enzyme UBE2G2 and ubiquitin ligase AMFR/gp78, leading to sterol-induced ubiquitination of HMGCR and its subsequent proteasomal degradation. Autoubiquitinated. Ubiquitination is induced by sterol and leads to ist degradation via the ubiquitin-proteasome pathway.

The protein localises to the endoplasmic reticulum membrane. It catalyses the reaction S-ubiquitinyl-[E2 ubiquitin-conjugating enzyme]-L-cysteine + [acceptor protein]-L-lysine = [E2 ubiquitin-conjugating enzyme]-L-cysteine + N(6)-ubiquitinyl-[acceptor protein]-L-lysine.. It functions in the pathway protein modification; protein ubiquitination. In terms of biological role, E3-ubiquitin ligase; acts as a negative regulator of cell proliferation through mechanisms involving G2/M arrest and cell death. Required for MHC class I ubiquitination in cells expressing the cytomegalovirus protein US2 before dislocation from the endoplasmic reticulum (ER). Affects SREBP processing by hindering the SREBP-SCAP complex translocation from the ER to the Golgi, thereby reducing SREBF2 target gene expression. Involved in the sterol-accelerated degradation of HMGCR. This is achieved through binding to INSIG1 and/or INSIG2 at the ER membrane. In addition, interaction of RNF139 with AUP1 facilitates interaction of RNF139 with ubiquitin-conjugating enzyme UBE2G2 and ubiquitin ligase AMFR, leading to ubiquitination of HMGCR. The ubiquitinated HMGCR is then released from the ER by the complex into the cytosol for subsequent destruction. Required for INSIG1 ubiquitination. May be required for EIF3 complex ubiquitination. The polypeptide is E3 ubiquitin-protein ligase RNF139 (RNF139) (Pongo abelii (Sumatran orangutan)).